Here is a 306-residue protein sequence, read N- to C-terminus: uncharacterized protein (306 aa).

This is an uncharacterized protein from Treponema pallidum (strain Nichols).